A 397-amino-acid polypeptide reads, in one-letter code: Geranylgeranyl pyrophosphate synthase AN1592 (397 aa).

The interval 1-67 (MSPPLDSALE…SHDSSASSNI (67 aa)) is disordered. Over residues 13–42 (SEYKETAFPRTEKDPSQYKEHDLVTPEKEI) the composition is skewed to basic and acidic residues. Low complexity predominate over residues 52-67 (SHSSHGSHDSSASSNI). Isopentenyl diphosphate-binding residues include Lys-120, Arg-123, and His-152. The Mg(2+) site is built by Asp-159 and Asp-163. Arg-168 is a binding site for dimethylallyl diphosphate. Position 169 (Arg-169) interacts with isopentenyl diphosphate. Dimethylallyl diphosphate-binding residues include Lys-247, Thr-248, and Gln-281. Asp-284 provides a ligand contact to Mg(2+). Residues Asn-288, Lys-298, and Lys-308 each contribute to the dimethylallyl diphosphate site.

This sequence belongs to the FPP/GGPP synthase family. Mg(2+) is required as a cofactor.

The enzyme catalyses isopentenyl diphosphate + dimethylallyl diphosphate = (2E)-geranyl diphosphate + diphosphate. It catalyses the reaction isopentenyl diphosphate + (2E)-geranyl diphosphate = (2E,6E)-farnesyl diphosphate + diphosphate. It carries out the reaction isopentenyl diphosphate + (2E,6E)-farnesyl diphosphate = (2E,6E,10E)-geranylgeranyl diphosphate + diphosphate. Its pathway is secondary metabolite biosynthesis; terpenoid biosynthesis. Functionally, geranylgeranyl pyrophosphate synthase; part of the gene cluster that mediates the biosynthesis of the diterpene ent-pimara-8(14),15-diene (PD). Within the cluster, the HMG-CoA reductase AN1593 functions in the mevalonate pathway, which produces isoprenoid precursors. The geranylgeranyl pyrophosphate (GGPP) synthase AN1592 is needed in the formation of GGPP, the precursor for diterpenes. Lastly, the pimaradiene synthase pbcA performs the 2 cyclization steps that convert GGPP to ent-pimara-8(14),15-diene. The putative roles of the remaining cluster enzymes in ent-pimara-8(14),15-diene biosynthesis is unclear. The cytochrome P450 monooxygenase AN1598, the glutathione S-transferase AN1595, the oxidoreductases AN1596 and AN1597 probably function as decorative enzymes. It is possible that in biological conditions the compound is oxidized to ent-pimara-8(14),15-dien-19-oic acid, which is a bioactive diterpene compound predominant in many plant extracts. This Emericella nidulans (strain FGSC A4 / ATCC 38163 / CBS 112.46 / NRRL 194 / M139) (Aspergillus nidulans) protein is Geranylgeranyl pyrophosphate synthase AN1592.